Reading from the N-terminus, the 404-residue chain is 6-hydroxytryptophan 2,3-dioxygenase fscD (404 aa).

Position 341 (His341) interacts with heme b.

This sequence belongs to the indoleamine 2,3-dioxygenase family. Requires heme as cofactor.

The protein operates within secondary metabolite biosynthesis. Functionally, 6-hydroxytryptophan 2,3-dioxygenase; part of the fragmented gene cluster that mediates the biosynthesis of fusarochromene, a tryptophan-derived metabolite closely related to a group of mycotoxins including fusarochromanone. Within the pathway, fscD is responsible of the cleavage of the pyrrole ring of 6-hydroxytryptophan. The first step of the pathway is the epimerization of L-tryptophan to D-tryptophan in the presence of the NRPS-like tryptophan epimerase fscC. D-tryptophan is subsequently hydroxylated by the tryptophan 6-hydroxylase fscE to yield 6-hydroxytryptophan. The pyrrole ring undergoes cleavaged by the tryptophan 2,3-dioxygenase fscD and is finally converted to 4-hydroxykyrunenine by the hydrolase fscH. The NRPS-like oxidoreductase fscA reduces the carboxyl group to primary alcohol and the DMATS-type prenyltransferase fscG performs prenylation, followed by the formation of a chromene ring catalyzed by the oxidoreductase fscI, which leads to desacetylfusarochromene. Epoxidation by fscF and rearrangement reactions of chromene double bonds convert compound desacetylfusarochromene to fusarochromanones. Although specific acetyltransferases were not found near the fsc gene cluster, several predicted enzymes containing the N-acetyltransferase superfamily domain are present in the genome of F.equiseti. These predicted enzymes may have the potential to convert desacetylfusarochromene to fusarochromene. This Fusarium equiseti (Fusarium scirpi) protein is 6-hydroxytryptophan 2,3-dioxygenase fscD.